The chain runs to 1377 residues: DNA-directed RNA polymerase subunit beta (1377 aa).

This sequence belongs to the RNA polymerase beta chain family. As to quaternary structure, the RNAP catalytic core consists of 2 alpha, 1 beta, 1 beta' and 1 omega subunit. When a sigma factor is associated with the core the holoenzyme is formed, which can initiate transcription.

The catalysed reaction is RNA(n) + a ribonucleoside 5'-triphosphate = RNA(n+1) + diphosphate. Its function is as follows. DNA-dependent RNA polymerase catalyzes the transcription of DNA into RNA using the four ribonucleoside triphosphates as substrates. The protein is DNA-directed RNA polymerase subunit beta of Azoarcus sp. (strain BH72).